We begin with the raw amino-acid sequence, 480 residues long: Methylenetetrahydrofolate--tRNA-(uracil-5-)-methyltransferase TrmFO (480 aa).

An FAD-binding site is contributed by 15-20 (GGGLAG).

It belongs to the MnmG family. TrmFO subfamily. It depends on FAD as a cofactor.

It localises to the cytoplasm. The catalysed reaction is uridine(54) in tRNA + (6R)-5,10-methylene-5,6,7,8-tetrahydrofolate + NADH + H(+) = 5-methyluridine(54) in tRNA + (6S)-5,6,7,8-tetrahydrofolate + NAD(+). It carries out the reaction uridine(54) in tRNA + (6R)-5,10-methylene-5,6,7,8-tetrahydrofolate + NADPH + H(+) = 5-methyluridine(54) in tRNA + (6S)-5,6,7,8-tetrahydrofolate + NADP(+). In terms of biological role, catalyzes the folate-dependent formation of 5-methyl-uridine at position 54 (M-5-U54) in all tRNAs. The protein is Methylenetetrahydrofolate--tRNA-(uracil-5-)-methyltransferase TrmFO of Sinorhizobium medicae (strain WSM419) (Ensifer medicae).